The chain runs to 231 residues: AA9 family lytic polysaccharide monooxygenase C (231 aa).

The first 18 residues, 1–18 (MKSGLLFTTASLALTASA), serve as a signal peptide directing secretion. Residue His19 coordinates Cu(2+). A disulfide bond links Cys60 and Cys179. N-linked (GlcNAc...) asparagine glycans are attached at residues Asn69 and Asn143. The O2 site is built by His165 and Gln174. Tyr176 is a binding site for Cu(2+).

Belongs to the polysaccharide monooxygenase AA9 family. The cofactor is Cu(2+).

It localises to the secreted. It carries out the reaction [(1-&gt;4)-beta-D-glucosyl]n+m + reduced acceptor + O2 = 4-dehydro-beta-D-glucosyl-[(1-&gt;4)-beta-D-glucosyl]n-1 + [(1-&gt;4)-beta-D-glucosyl]m + acceptor + H2O.. Functionally, lytic polysaccharide monooxygenase (LPMO) that depolymerizes crystalline and amorphous polysaccharides via the oxidation of scissile alpha- or beta-(1-4)-glycosidic bonds, yielding C1 oxidation products. Catalysis by LPMOs requires the reduction of the active-site copper from Cu(II) to Cu(I) by a reducing agent and H(2)O(2) or O(2) as a cosubstrate. The chain is AA9 family lytic polysaccharide monooxygenase C from Emericella nidulans (strain FGSC A4 / ATCC 38163 / CBS 112.46 / NRRL 194 / M139) (Aspergillus nidulans).